The sequence spans 776 residues: MADPGVCCFITKILCAHGGRMTLEELLGEIRLPEAQLYELLETAGPDRFVLLETGGQAGITRSVVATTRARVCRRKYCQRPCDSLHLCKLNLLGRCHYAQSQRNLCKYSHDVLSEQNFQILKNHELSGLNQEELACLLVQSDPFFLPEICKSYKGEGRKQTCGQPQPCERLHICEHFTRGNCSYLNCLRSHNLMDRKVLTIMREHGLSPDVVQNIQDICNNKHARRNPPGTRAAHPHRRGGAHRDRSKSRDRFLHNSLEFLSPVVSPLGSGPPSPDVTSCKDSLEDVSVDVTQKFKYLGTHDRAQLSPVSSKAAGVQGPSQMRASQEFSEDGNLDDIFSRNRSDSSSSRASAAKVAQRNEAVAMKMGMEVKGKKEAPDIDRVPFLNSYIDGVTMEKASVSGIPGKKFTANDLENLLLLNDTWKNVAKPQDLQTTGRITDSGQDKAFLQNKYGGNPVWASASTHNAPNGSSQIMDETPNVSKSSTSGFAIKPAIAGGKEAVYSGVQSPRSQVLAVPGEATTPVQSNRLPQSPLSSSSHRAAASGSPGKNSTHTSVSPAIESSRMTSDPDEYLLRYILNPLFRMDNHGPKEICQDHLYKGCQQSHCDRSHFHLPYRWQMFVYTTWRDFQDMESIEQAYCDPHVELILIENHQINFQKMTCDSYPIRRLSTPSYEEKPLSAVFATKWIWYWKNEFNEYIQYGNESPGHTSSDINSAYLESFFQSCPRGVLPFQAGSQKYELSFQGMIQTNIASKTQRHVVRRPVFVSSNDVEQKRRGPE.

A2 carries the post-translational modification N-acetylalanine. The segment at 2-254 is N-terminal domain; it reads ADPGVCCFIT…DRSKSRDRFL (253 aa). The short motif at 69–76 is the Nuclear localization signal element; sequence RARVCRRK. 4 C3H1-type zinc fingers span residues 73–86, 88–110, 150–172, and 169–193; these read CRRK…DSLH, CKLN…KYSH, CKSY…ERLH, and ERLH…SHNL. The interval 221-249 is disordered; sequence NKHARRNPPGTRAAHPHRRGGAHRDRSKS. The binding to EXOSC5 stretch occupies residues 224–254; it reads ARRNPPGTRAAHPHRRGGAHRDRSKSRDRFL. Phosphoserine; by GSK3-beta is present on residues S257, S262, S266, and S270. S274 is modified (phosphoserine). Residue T278 is modified to Phosphothreonine. Position 283 is a phosphoserine (S283). Positions 284 to 291 match the Nuclear export signal motif; that stretch reads LEDVSVDV. The interval 308–355 is disordered; it reads PVSSKAAGVQGPSQMRASQEFSEDGNLDDIFSRNRSDSSSSRASAAKV. Residues 318 to 327 are compositionally biased toward polar residues; sequence GPSQMRASQE. 3 positions are modified to phosphoserine: S325, S351, and S398. The span at 344 to 353 shows a compositional bias: low complexity; the sequence is DSSSSRASAA. Residues 405–406 carry the Nuclear localization signal motif; sequence KK. The segment at 457-483 is disordered; that stretch reads WASASTHNAPNGSSQIMDETPNVSKSS. The span at 459-483 shows a compositional bias: polar residues; sequence SASTHNAPNGSSQIMDETPNVSKSS. A Phosphotyrosine modification is found at Y501. Positions 512–562 are disordered; the sequence is LAVPGEATTPVQSNRLPQSPLSSSSHRAAASGSPGKNSTHTSVSPAIESSR. Over residues 523–546 the composition is skewed to low complexity; it reads QSNRLPQSPLSSSSHRAAASGSPG. A phosphoserine mark is found at S544 and S667. Positions 671–758 constitute a WWE domain; that stretch reads YEEKPLSAVF…ASKTQRHVVR (88 aa).

It belongs to the ARTD/PARP family. Homodimer or homooligomer. Homooligomerization is essential for its antiviral activity. Interacts with EXOSC5. Interacts with EXOSC3, EXOSC7, DCP2 and DCP1A. Interacts with PARN in an RNA-independent manner. Interacts with XRN1 in an RNA-dependent manner. Interacts (via N-terminal domain) with DHX30 (via N-terminus) in an RNA-independent manner. Interacts (via N-terminal domain) with DDX17 in an RNA-independent manner. Phosphorylation at Ser-274 is essential for sequential phosphorylation of Ser-270, Ser-266, Ser-262 and Ser-257 by GSK3-beta. Phosphorylation by GSK3-beta enhances its antiviral activity. Expressed in the kidney and liver.

The protein localises to the cytoplasm. Its subcellular location is the nucleus. Its function is as follows. Antiviral protein which inhibits the replication of viruses by recruiting the cellular RNA degradation machineries to degrade the viral mRNAs. Binds to a ZAP-responsive element (ZRE) present in the target viral mRNA, recruits cellular poly(A)-specific ribonuclease PARN to remove the poly(A) tail, and the 3'-5' exoribonuclease complex exosome to degrade the RNA body from the 3'-end. It also recruits the decapping complex DCP1-DCP2 through RNA helicase p72 (DDX17) to remove the cap structure of the viral mRNA to initiate its degradation from the 5'-end. Its target viruses belong to families which include retroviridae: human immunodeficiency virus type 1 (HIV-1) and moloney and murine leukemia virus (MoMLV), filoviridae: ebola virus (EBOV) and marburg virus (MARV), togaviridae: sindbis virus (SINV) and Ross river virus (RRV). Specifically targets the multiply spliced but not unspliced or singly spliced HIV-1 mRNAs for degradation. This is Zinc finger CCCH-type antiviral protein 1 (Zc3hav1) from Rattus norvegicus (Rat).